Here is a 248-residue protein sequence, read N- to C-terminus: Triosephosphate isomerase (248 aa).

Substrate is bound by residues Asn10 and Lys12. His95 functions as the Electrophile in the catalytic mechanism. The active-site Proton acceptor is the Glu165.

This sequence belongs to the triosephosphate isomerase family. In terms of assembly, homodimer.

The enzyme catalyses D-glyceraldehyde 3-phosphate = dihydroxyacetone phosphate. It functions in the pathway carbohydrate biosynthesis; gluconeogenesis. The protein operates within carbohydrate degradation; glycolysis; D-glyceraldehyde 3-phosphate from glycerone phosphate: step 1/1. The polypeptide is Triosephosphate isomerase (TPI1) (Kluyveromyces marxianus (Yeast)).